The primary structure comprises 351 residues: Holliday junction branch migration complex subunit RuvB (351 aa).

A large ATPase domain (RuvB-L) region spans residues 4 to 199 (DNPQFNQWYE…FGIINSLQYY (196 aa)). ATP-binding positions include Leu-38, Arg-39, Gly-80, Lys-83, Thr-84, Thr-85, 146–148 (EDY), Arg-189, Tyr-199, and Arg-236. Thr-84 contributes to the Mg(2+) binding site. The segment at 200-270 (TPEELQQIVV…IVTIGLDKLR (71 aa)) is small ATPAse domain (RuvB-S). The tract at residues 273-351 (NRGLDETDHK…HLGHAYQRKL (79 aa)) is head domain (RuvB-H). The DNA site is built by Arg-328 and Arg-333.

This sequence belongs to the RuvB family. Homohexamer. Forms an RuvA(8)-RuvB(12)-Holliday junction (HJ) complex. HJ DNA is sandwiched between 2 RuvA tetramers; dsDNA enters through RuvA and exits via RuvB. An RuvB hexamer assembles on each DNA strand where it exits the tetramer. Each RuvB hexamer is contacted by two RuvA subunits (via domain III) on 2 adjacent RuvB subunits; this complex drives branch migration. In the full resolvosome a probable DNA-RuvA(4)-RuvB(12)-RuvC(2) complex forms which resolves the HJ.

Its subcellular location is the cytoplasm. It carries out the reaction ATP + H2O = ADP + phosphate + H(+). Its function is as follows. The RuvA-RuvB-RuvC complex processes Holliday junction (HJ) DNA during genetic recombination and DNA repair, while the RuvA-RuvB complex plays an important role in the rescue of blocked DNA replication forks via replication fork reversal (RFR). RuvA specifically binds to HJ cruciform DNA, conferring on it an open structure. The RuvB hexamer acts as an ATP-dependent pump, pulling dsDNA into and through the RuvAB complex. RuvB forms 2 homohexamers on either side of HJ DNA bound by 1 or 2 RuvA tetramers; 4 subunits per hexamer contact DNA at a time. Coordinated motions by a converter formed by DNA-disengaged RuvB subunits stimulates ATP hydrolysis and nucleotide exchange. Immobilization of the converter enables RuvB to convert the ATP-contained energy into a lever motion, pulling 2 nucleotides of DNA out of the RuvA tetramer per ATP hydrolyzed, thus driving DNA branch migration. The RuvB motors rotate together with the DNA substrate, which together with the progressing nucleotide cycle form the mechanistic basis for DNA recombination by continuous HJ branch migration. Branch migration allows RuvC to scan DNA until it finds its consensus sequence, where it cleaves and resolves cruciform DNA. This Leuconostoc mesenteroides subsp. mesenteroides (strain ATCC 8293 / DSM 20343 / BCRC 11652 / CCM 1803 / JCM 6124 / NCDO 523 / NBRC 100496 / NCIMB 8023 / NCTC 12954 / NRRL B-1118 / 37Y) protein is Holliday junction branch migration complex subunit RuvB.